A 332-amino-acid polypeptide reads, in one-letter code: MTSSNISICATEDQMVLQTSLLLRVNVILMTTVAIFTFVLTYRALFILKQRPIFHKSTKILLYTSLIFVNIHEIIFMVIQCVAFIRSFTLSDKPCEIMRTTLECRFKNHVLIFGIAGMNFNQFGLTVDRLLATVIPQTYSHLGSFPGILISILVIGCSIAAPLIIAIGDPYDDIVPNCFFFPQHSAPRANVFLIILSALVIASIFLNLIIIFANKKLEKGTRYYVSQRYQKREALISTRIIVYIAASQFLGMVLYSTIVLTLRLHKSMIPVSMYHNIVWWAYTVPFAAVALPALLIHRINLVGSNRKRVINRITAKVETQEEHMKSLKELWG.

Topologically, residues 1–26 (MTSSNISICATEDQMVLQTSLLLRVN) are extracellular. A helical transmembrane segment spans residues 27-47 (VILMTTVAIFTFVLTYRALFI). Topologically, residues 48–64 (LKQRPIFHKSTKILLYT) are cytoplasmic. A helical transmembrane segment spans residues 65 to 85 (SLIFVNIHEIIFMVIQCVAFI). Over 86 to 109 (RSFTLSDKPCEIMRTTLECRFKNH) the chain is Extracellular. Residues 110–132 (VLIFGIAGMNFNQFGLTVDRLLA) traverse the membrane as a helical segment. At 133-146 (TVIPQTYSHLGSFP) the chain is on the cytoplasmic side. A helical membrane pass occupies residues 147 to 167 (GILISILVIGCSIAAPLIIAI). The Extracellular segment spans residues 168 to 191 (GDPYDDIVPNCFFFPQHSAPRANV). A helical transmembrane segment spans residues 192–212 (FLIILSALVIASIFLNLIIIF). Residues 213 to 239 (ANKKLEKGTRYYVSQRYQKREALISTR) are Cytoplasmic-facing. The helical transmembrane segment at 240–260 (IIVYIAASQFLGMVLYSTIVL) threads the bilayer. The Extracellular segment spans residues 261–276 (TLRLHKSMIPVSMYHN). A helical membrane pass occupies residues 277–297 (IVWWAYTVPFAAVALPALLIH). The Cytoplasmic segment spans residues 298 to 332 (RINLVGSNRKRVINRITAKVETQEEHMKSLKELWG).

Belongs to the nematode receptor-like protein sra family.

The protein localises to the membrane. The protein is Serpentine receptor class alpha-10 of Caenorhabditis briggsae.